Consider the following 473-residue polypeptide: Maltose fermentation regulatory protein MAL13 (473 aa).

Residues 13-39 (CDCCRIRRVKCDGKRPCSSCLQNSLDC) constitute a DNA-binding region (zn(2)-C6 fungal-type). Positions 46–54 (RKRGPKSIR) match the Nuclear localization signal motif.

The protein belongs to the MAL13 family.

It is found in the nucleus. Its function is as follows. Regulates the coordinate transcription of structural MAL1S (maltase) and AGT1 (maltose permease) genes. This Saccharomyces cerevisiae (strain ATCC 204508 / S288c) (Baker's yeast) protein is Maltose fermentation regulatory protein MAL13 (MAL13).